The following is a 505-amino-acid chain: Peroxisome proliferator-activated receptor gamma (505 aa).

O-linked (GlcNAc) threonine glycosylation occurs at T84. Position 112 is a phosphoserine; by MAPK (S112). Residues 136–210 (AIECRVCGDK…VGMSHNAIRF (75 aa)) constitute a DNA-binding region (nuclear receptor). 2 NR C4-type zinc fingers span residues 139-159 (CRVC…CEGC) and 176-198 (CDLN…FQKC). Residues 205–280 (HNAIRFGRMP…DKSPFVIYDM (76 aa)) form an interaction with FAM120B region. Residues 238-503 (DLRALAKHLY…HPLLQEIYKD (266 aa)) enclose the NR LBD domain. K252 is covalently cross-linked (Glycyl lysine isopeptide (Lys-Gly) (interchain with G-Cter in ubiquitin)). The 9aaTAD motif lies at 495 to 503 (PLLQEIYKD).

It belongs to the nuclear hormone receptor family. NR1 subfamily. In terms of assembly, interacts with FOXO1 (acetylated form). Heterodimer with other nuclear receptors, such as RXRA. The heterodimer with the retinoic acid receptor RXRA is called adipocyte-specific transcription factor ARF6. Interacts with NCOA6 coactivator, leading to a strong increase in transcription of target genes. Interacts with coactivator PPARBP, leading to a mild increase in transcription of target genes. Interacts with NOCA7 in a ligand-inducible manner. Interacts with NCOA1 and NCOA2 LXXLL motifs. Interacts with ASXL1, ASXL2, DNTTIP2, FAM120B, MAP2K1/MEK1, NR0B2, PDPK1, PRDM16, PRMT2 and TGFB1I1. Interacts (when activated by agonist) with PPP5C. Interacts with HELZ2 and THRAP3; the interaction stimulates the transcriptional activity of PPARG. Interacts with PER2, the interaction is ligand dependent and blocks PPARG recruitment to target promoters. Interacts with NOCT. Interacts with ACTN4. Interacts (when in the liganded conformation) with GPS2. Interacts with CRY1 and CRY2 in a ligand-dependent manner. In the absence of hormonal ligand, interacts with TACC1. In macrophages, interacts with PAQR3 and STUB1; the interactions promote PPARG poylubiquitination and STUB1-mediated degradation. In terms of processing, O-GlcNAcylation at Thr-84 reduces transcriptional activity in adipocytes. Post-translationally, phosphorylated at basal conditions and dephosphorylated when treated with the ligand. May be dephosphorylated by PPP5C. The phosphorylated form may be inactive and dephosphorylation induces adipogenic activity. Ubiquitinated by E3 ubiquitin-protein ligase complex containing FBXO9; leading to proteasomal degradation. Ubiquitinated at Lys-252 by TRIM55 leading to proteasomal degradation. Ubiquitinated by E3 ubiquitin-protein ligase STUB1/CHIP; leading to proteasomal degradation. As to expression, highest expression in adipose tissue. Lower in liver, heart, kidney, stomach, duodenum and colon.

It is found in the nucleus. The protein resides in the cytoplasm. Its activity is regulated as follows. PDPK1 activates its transcriptional activity independently of its kinase activity. Functionally, nuclear receptor that binds peroxisome proliferators such as hypolipidemic drugs and fatty acids. Once activated by a ligand, the nuclear receptor binds to DNA specific PPAR response elements (PPRE) and modulates the transcription of its target genes, such as acyl-CoA oxidase. It therefore controls the peroxisomal beta-oxidation pathway of fatty acids. Key regulator of adipocyte differentiation and glucose homeostasis. ARF6 acts as a key regulator of the tissue-specific adipocyte P2 (aP2) enhancer. Acts as a critical regulator of gut homeostasis by suppressing NF-kappa-B-mediated pro-inflammatory responses. Plays a role in the regulation of cardiovascular circadian rhythms by regulating the transcription of BMAL1 in the blood vessels. In Macaca mulatta (Rhesus macaque), this protein is Peroxisome proliferator-activated receptor gamma (PPARG).